We begin with the raw amino-acid sequence, 930 residues long: Isoleucine--tRNA ligase (930 aa).

The 'HIGH' region signature appears at 57 to 67; that stretch reads PYANGNIHVGH. Residue Glu554 participates in L-isoleucyl-5'-AMP binding. The 'KMSKS' region motif lies at 595–599; that stretch reads KMSKS. Residue Lys598 participates in ATP binding. Cys888, Cys891, Cys908, and Cys911 together coordinate Zn(2+).

This sequence belongs to the class-I aminoacyl-tRNA synthetase family. IleS type 1 subfamily. Monomer. Zn(2+) serves as cofactor.

Its subcellular location is the cytoplasm. The catalysed reaction is tRNA(Ile) + L-isoleucine + ATP = L-isoleucyl-tRNA(Ile) + AMP + diphosphate. Functionally, catalyzes the attachment of isoleucine to tRNA(Ile). As IleRS can inadvertently accommodate and process structurally similar amino acids such as valine, to avoid such errors it has two additional distinct tRNA(Ile)-dependent editing activities. One activity is designated as 'pretransfer' editing and involves the hydrolysis of activated Val-AMP. The other activity is designated 'posttransfer' editing and involves deacylation of mischarged Val-tRNA(Ile). This Streptococcus pneumoniae (strain P1031) protein is Isoleucine--tRNA ligase.